The chain runs to 143 residues: Small ribosomal subunit protein bS6 (143 aa).

The interval 100–143 is disordered; the sequence is QSFIMKSKDDKGDKPERRRRDDDESGDVGVSNDSDNDGGNAEAA. Residues 105 to 121 show a composition bias toward basic and acidic residues; the sequence is KSKDDKGDKPERRRRDD. Positions 126–143 are enriched in low complexity; that stretch reads DVGVSNDSDNDGGNAEAA.

The protein belongs to the bacterial ribosomal protein bS6 family.

Binds together with bS18 to 16S ribosomal RNA. The chain is Small ribosomal subunit protein bS6 from Xylella fastidiosa (strain M12).